Reading from the N-terminus, the 818-residue chain is Structure-specific endonuclease subunit SLX4 (818 aa).

5 disordered regions span residues 1 to 39 (MSFL…PSAS), 53 to 151 (RDPY…SSSN), 279 to 324 (FSEG…HQDS), 413 to 437 (NAQF…KTSK), and 587 to 712 (MLPA…MASE). A compositionally biased stretch (low complexity) spans 28–39 (VIDSSPSVPSAS). Over residues 90-103 (PSERTKDAHGKDRF) the composition is skewed to basic and acidic residues. The segment covering 306-316 (TTSTTITSLST) has biased composition (low complexity). The segment covering 426–437 (TRSPCSNPKTSK) has biased composition (polar residues). Residues 604–618 (QMSKRDTIKSRDIRA) show a composition bias toward basic and acidic residues. Polar residues-rich tracts occupy residues 621–640 (SRSN…QNTG), 652–672 (SSKS…TQSV), and 696–712 (SLAS…MASE).

It belongs to the SLX4 family. As to quaternary structure, forms a heterodimer with SLX1. Post-translationally, phosphorylated in response to DNA damage.

The protein resides in the nucleus. Functionally, regulatory subunit of the SLX1-SLX4 structure-specific endonuclease that resolves DNA secondary structures generated during DNA repair and recombination. Has endonuclease activity towards branched DNA substrates, introducing single-strand cuts in duplex DNA close to junctions with ss-DNA. This chain is Structure-specific endonuclease subunit SLX4, found in Uncinocarpus reesii (strain UAMH 1704).